A 255-amino-acid polypeptide reads, in one-letter code: Octanoyltransferase (255 aa).

The segment at 1–27 (MPPASDAHAAPDAAASTSASPQSCAAP) is disordered. Residues 59-240 (PDTGDEIWVV…RLIANLDGAT (182 aa)) enclose the BPL/LPL catalytic domain. Residues 99–106 (RGGQITYH), 171–173 (ALG), and 184–186 (GLS) each bind substrate. The active-site Acyl-thioester intermediate is the Cys-202.

It belongs to the LipB family.

The protein resides in the cytoplasm. It catalyses the reaction octanoyl-[ACP] + L-lysyl-[protein] = N(6)-octanoyl-L-lysyl-[protein] + holo-[ACP] + H(+). It participates in protein modification; protein lipoylation via endogenous pathway; protein N(6)-(lipoyl)lysine from octanoyl-[acyl-carrier-protein]: step 1/2. Catalyzes the transfer of endogenously produced octanoic acid from octanoyl-acyl-carrier-protein onto the lipoyl domains of lipoate-dependent enzymes. Lipoyl-ACP can also act as a substrate although octanoyl-ACP is likely to be the physiological substrate. In Burkholderia thailandensis (strain ATCC 700388 / DSM 13276 / CCUG 48851 / CIP 106301 / E264), this protein is Octanoyltransferase.